A 356-amino-acid chain; its full sequence is AT-hook motif nuclear-localized protein 1 (356 aa).

The disordered stretch occupies residues 1 to 127; that stretch reads MVLNMESTGE…PSHLPPPSSH (127 aa). Positions 49–66 are enriched in pro residues; sequence VTPPPPQPSSHHTAPPPL. Positions 88–97 are enriched in basic residues; it reads MKKKRGRPRK. Residues 89 to 97 carry the Bipartite nuclear localization signal motif; it reads KKKRGRPRK. Residues 89 to 101 constitute a DNA-binding region (a.T hook); that stretch reads KKKRGRPRKYGPD. Positions 106–118 are enriched in low complexity; sequence ALSPKPISSAPAP. Residues 167–309 form the PPC domain; sequence GGNFTPHIIT…KHDFMLSSPT (143 aa). Residues 270–287 form a required for nuclear localization region; that stretch reads GLLVAASPVQVVVGSFLA. The Nuclear localization signal motif lies at 295 to 302; it reads KPKKNKHD.

It is found in the nucleus. The protein resides in the nucleoplasm. The protein localises to the chromosome. In terms of biological role, transcription factor that specifically binds AT-rich DNA sequences related to the nuclear matrix attachment regions (MARs). May play a function in the positioning of chromatin fibers within the nucleus. In Arabidopsis thaliana (Mouse-ear cress), this protein is AT-hook motif nuclear-localized protein 1.